The chain runs to 571 residues: Phosphatidylinositol-3,5-bisphosphate 3-phosphatase MTMR2 (571 aa).

Residues 1–67 (MEEPPLLPGE…GVINRVEKIG (67 aa)) enclose the GRAM domain. The region spanning 133 to 508 (GWKVYDPIWE…RHLELWVGYY (376 aa)) is the Myotubularin phosphatase domain. The a 1,2-diacyl-sn-glycero-3-phospho-(1D-myo-inositol-3,5-bisphosphate) site is built by N258, N283, and I284. A 1,2-diacyl-sn-glycero-3-phospho-(1D-myo-inositol-3-phosphate) contacts are provided by N258, N283, and I284. C345 serves as the catalytic Phosphocysteine intermediate. S346, D347, G348, W349, D350, R351, R387, and R391 together coordinate a 1,2-diacyl-sn-glycero-3-phospho-(1D-myo-inositol-3,5-bisphosphate). A 1,2-diacyl-sn-glycero-3-phospho-(1D-myo-inositol-3-phosphate) contacts are provided by S346, D347, G348, W349, D350, and R351. Position 391 (R391) interacts with a 1,2-diacyl-sn-glycero-3-phospho-(1D-myo-inositol-3-phosphate). Positions 521-553 (VHNRYKELLAKRAELQKKVEELQREITNRSTSS) form a coiled coil. The disordered stretch occupies residues 544-571 (REITNRSTSSSERAGSPAQCVTPVQTVV).

This sequence belongs to the protein-tyrosine phosphatase family. Non-receptor class myotubularin subfamily. Homooligomer and heterooligomer.

The protein localises to the cytoplasm. It is found in the early endosome membrane. The enzyme catalyses a 1,2-diacyl-sn-glycero-3-phospho-(1D-myo-inositol-3,5-bisphosphate) + H2O = a 1,2-diacyl-sn-glycero-3-phospho-(1D-myo-inositol-5-phosphate) + phosphate. The catalysed reaction is a 1,2-diacyl-sn-glycero-3-phospho-(1D-myo-inositol-3-phosphate) + H2O = a 1,2-diacyl-sn-glycero-3-phospho-(1D-myo-inositol) + phosphate. It catalyses the reaction 1,2-dioctanoyl-sn-glycero-3-phospho-(1-D-myo-inositol-3-phosphate) + H2O = 1,2-dioctanoyl-sn-glycero-3-phospho-(1D-myo-inositol) + phosphate. It carries out the reaction 1,2-dioctanoyl-sn-glycero-3-phospho-(1D-myo-inositol-3,5-bisphosphate) + H2O = 1,2-dioctanoyl-sn-glycero-3-phospho-(1D-myo-inositol-5-phosphate) + phosphate. Lipid phosphatase that specifically dephosphorylates the D-3 position of phosphatidylinositol 3-phosphate and phosphatidylinositol 3,5-bisphosphate, generating phosphatidylinositol and phosphatidylinositol 5-phosphate. Regulates the level of these phosphoinositides critical for various biological processes including autophagy initiation and autophagosome maturation. In Gallus gallus (Chicken), this protein is Phosphatidylinositol-3,5-bisphosphate 3-phosphatase MTMR2.